The chain runs to 496 residues: Probable cytosol aminopeptidase (496 aa).

Mn(2+) is bound by residues lysine 261 and aspartate 266. Lysine 273 is a catalytic residue. Aspartate 284, aspartate 343, and glutamate 345 together coordinate Mn(2+). Arginine 347 is a catalytic residue.

Belongs to the peptidase M17 family. Mn(2+) is required as a cofactor.

Its subcellular location is the cytoplasm. The catalysed reaction is Release of an N-terminal amino acid, Xaa-|-Yaa-, in which Xaa is preferably Leu, but may be other amino acids including Pro although not Arg or Lys, and Yaa may be Pro. Amino acid amides and methyl esters are also readily hydrolyzed, but rates on arylamides are exceedingly low.. The enzyme catalyses Release of an N-terminal amino acid, preferentially leucine, but not glutamic or aspartic acids.. Presumably involved in the processing and regular turnover of intracellular proteins. Catalyzes the removal of unsubstituted N-terminal amino acids from various peptides. The polypeptide is Probable cytosol aminopeptidase (Bacillus licheniformis (strain ATCC 14580 / DSM 13 / JCM 2505 / CCUG 7422 / NBRC 12200 / NCIMB 9375 / NCTC 10341 / NRRL NRS-1264 / Gibson 46)).